The following is a 309-amino-acid chain: MVVVIPRLLRGSLGAICTQAALLRSTPSAFRYLTRSSVMKSKRRPDHLERTADVVRQEVVSAAKVCGVASESPSVKRLCLLVADKDFSFKAGQWVDFFIPGVSVVGGFSICSSPRLLEQERMIELAVKHANHPPALWIHNQCTLDSEVAVRVGGEFFFDPKPTDASRNLVLIAGGVGINPLLSILRHAADLLRERASKGQGYEMGTVRLLYSAKDTSELLFKKNILDLVNEFPEKIACSLHVTKQTTQITADLRPYITEGRITQKEIRDHISKETLFYICGPPPMTDFFSKELESSRVPREHICFEKWW.

A signal peptide spans 1–14 (MVVVIPRLLRGSLG). The FAD-binding FR-type domain occupies 47–161 (HLERTADVVR…VGGEFFFDPK (115 aa)). NAD(+) is bound at residue 175–180 (GVGINP).

The chain is Oxidoreductase NAD-binding domain-containing protein 1 (OXNAD1) from Bos taurus (Bovine).